We begin with the raw amino-acid sequence, 404 residues long: Glycerol-1-phosphate dehydrogenase [NAD(P)+] (404 aa).

Residues D55, G117–D121, and T139–S142 contribute to the NAD(+) site. A substrate-binding site is contributed by D144. An NAD(+)-binding site is contributed by S148. A substrate-binding site is contributed by D191. Residues D191 and H271 each contribute to the Ni(2+) site. Residue H275 coordinates substrate. A Ni(2+)-binding site is contributed by H291.

This sequence belongs to the glycerol-1-phosphate dehydrogenase family. In terms of assembly, homodimer. Ni(2+) is required as a cofactor.

It localises to the cytoplasm. The enzyme catalyses sn-glycerol 1-phosphate + NAD(+) = dihydroxyacetone phosphate + NADH + H(+). It catalyses the reaction sn-glycerol 1-phosphate + NADP(+) = dihydroxyacetone phosphate + NADPH + H(+). Catalyzes the NAD(P)H-dependent reduction of dihydroxyacetonephosphate (DHAP or glycerone phosphate) to glycerol 1-phosphate (G1P). The G1P thus generated is probably used for the synthesis of phosphoglycerolipids in Gram-positive bacterial species. In Geobacillus thermodenitrificans (strain NG80-2), this protein is Glycerol-1-phosphate dehydrogenase [NAD(P)+].